A 612-amino-acid polypeptide reads, in one-letter code: MPDYRSKTSTHGRNMAGARALWRATGMKDEDFKKPIIAIANSFTQFVPGHVHLKDMGQLVAREIEKHGGVAKEFNTIAVDDGIAMGHDGMLYSLPSREIIADSVEYMVNAHCADAIVCISNCDKITPGMLMAALRLNIPVVFVSGGPMEAGKTKLANHGLDLVDAMVVAADDSCSDEKVAEYERSACPTCGSCSGMFTANSMNCLTEALGLSLPGNGTTLATHADREQLFLRAGRIAVELCKRYYQDGDESVLPRNVASRKAFENAMTLDIAMGGSTNTILHLLAAAQEAEVDFDLRDIDALSRKVPQLCKVAPNIQKYHMEDVHRAGGIFSILGELARGGLLHTDASTVHSPSMADAIAEWDITQTQDEAVHTFFKAGPAGIPTQVAFSQATRWPSLDLDRAEGCIRSVEHAYSQEGGLAVLYGNIALDGCVVKTAGVDESIHVFEGTAKIFESQDSAVKGILNDEVKAGDIVIIRYEGPKGGPGMQEMLYPTSYLKSKGLGKECALLTDGRFSGGTSGLSIGHASPEAAAGGAIGLVQDGDKVLIDIPNRSIQLQVSDEELAHRRIEQDKKGWKPAQPRARKVSTALKAYALLATSADKGAVRDKAMLDG.

Aspartate 81 serves as a coordination point for Mg(2+). Cysteine 122 lines the [2Fe-2S] cluster pocket. 2 residues coordinate Mg(2+): aspartate 123 and lysine 124. Lysine 124 carries the post-translational modification N6-carboxylysine. Cysteine 193 serves as a coordination point for [2Fe-2S] cluster. Glutamate 489 provides a ligand contact to Mg(2+). Catalysis depends on serine 515, which acts as the Proton acceptor.

Belongs to the IlvD/Edd family. As to quaternary structure, homodimer. It depends on [2Fe-2S] cluster as a cofactor. Mg(2+) serves as cofactor.

The catalysed reaction is (2R)-2,3-dihydroxy-3-methylbutanoate = 3-methyl-2-oxobutanoate + H2O. It catalyses the reaction (2R,3R)-2,3-dihydroxy-3-methylpentanoate = (S)-3-methyl-2-oxopentanoate + H2O. The protein operates within amino-acid biosynthesis; L-isoleucine biosynthesis; L-isoleucine from 2-oxobutanoate: step 3/4. It functions in the pathway amino-acid biosynthesis; L-valine biosynthesis; L-valine from pyruvate: step 3/4. Functionally, functions in the biosynthesis of branched-chain amino acids. Catalyzes the dehydration of (2R,3R)-2,3-dihydroxy-3-methylpentanoate (2,3-dihydroxy-3-methylvalerate) into 2-oxo-3-methylpentanoate (2-oxo-3-methylvalerate) and of (2R)-2,3-dihydroxy-3-methylbutanoate (2,3-dihydroxyisovalerate) into 2-oxo-3-methylbutanoate (2-oxoisovalerate), the penultimate precursor to L-isoleucine and L-valine, respectively. The chain is Dihydroxy-acid dehydratase from Stutzerimonas stutzeri (strain A1501) (Pseudomonas stutzeri).